A 262-amino-acid chain; its full sequence is Hydroxyethylthiazole kinase (262 aa).

M39 serves as a coordination point for substrate. ATP is bound by residues K115 and T160. Residue G187 participates in substrate binding.

Belongs to the Thz kinase family. Mg(2+) serves as cofactor.

It catalyses the reaction 5-(2-hydroxyethyl)-4-methylthiazole + ATP = 4-methyl-5-(2-phosphooxyethyl)-thiazole + ADP + H(+). It functions in the pathway cofactor biosynthesis; thiamine diphosphate biosynthesis; 4-methyl-5-(2-phosphoethyl)-thiazole from 5-(2-hydroxyethyl)-4-methylthiazole: step 1/1. Functionally, catalyzes the phosphorylation of the hydroxyl group of 4-methyl-5-beta-hydroxyethylthiazole (THZ). The chain is Hydroxyethylthiazole kinase from Staphylococcus epidermidis (strain ATCC 35984 / DSM 28319 / BCRC 17069 / CCUG 31568 / BM 3577 / RP62A).